The primary structure comprises 273 residues: Ribosomal RNA small subunit methyltransferase A (273 aa).

The S-adenosyl-L-methionine site is built by asparagine 18, leucine 20, glycine 45, glutamate 66, aspartate 91, and asparagine 113.

The protein belongs to the class I-like SAM-binding methyltransferase superfamily. rRNA adenine N(6)-methyltransferase family. RsmA subfamily.

The protein resides in the cytoplasm. The catalysed reaction is adenosine(1518)/adenosine(1519) in 16S rRNA + 4 S-adenosyl-L-methionine = N(6)-dimethyladenosine(1518)/N(6)-dimethyladenosine(1519) in 16S rRNA + 4 S-adenosyl-L-homocysteine + 4 H(+). Its function is as follows. Specifically dimethylates two adjacent adenosines (A1518 and A1519) in the loop of a conserved hairpin near the 3'-end of 16S rRNA in the 30S particle. May play a critical role in biogenesis of 30S subunits. This Escherichia fergusonii (strain ATCC 35469 / DSM 13698 / CCUG 18766 / IAM 14443 / JCM 21226 / LMG 7866 / NBRC 102419 / NCTC 12128 / CDC 0568-73) protein is Ribosomal RNA small subunit methyltransferase A.